A 984-amino-acid polypeptide reads, in one-letter code: Vacuolar sorting protein 3 (984 aa).

A CNH domain is found at 21 to 339 (KIRALSLSPI…GCGPSLLAAD (319 aa)). A CHCR repeat occupies 663–844 (VLTSDKRTEE…YLDPQNGKEP (182 aa)).

The protein belongs to the TRAP1 family. As to quaternary structure, component of the class C core vacuole/endosome tethering (CORVET) complex. Their common core is composed of the class C Vps core proteins VPS11, VCL1, VPS18 and VPS33, which in CORVET further associates with VPS3. Interacts directly with VPS11. Binds to RABF2A and RABF2B.

It localises to the endosome membrane. The protein localises to the cytoplasm. Functionally, essential protein required during embryogenesis. Believed to act as a component of the putative class C core vacuole/endosome tethering (CORVET) endosomal tethering complexes. CORVET is required for vacuolar transport of SYP22. Involved in root development. Plays a role in vesicle-mediated protein trafficking of the endocytic membrane transport pathway. The protein is Vacuolar sorting protein 3 of Arabidopsis thaliana (Mouse-ear cress).